Here is an 86-residue protein sequence, read N- to C-terminus: Omega-theraphotoxin-Hhn1f 3 (86 aa).

A signal peptide spans M1–A21. Positions S22 to R50 are excised as a propeptide. Cystine bridges form between C52–C66, C59–C71, and C65–C78.

This sequence belongs to the neurotoxin 10 (Hwtx-1) family. 17 (Hntx-9) subfamily. In terms of tissue distribution, expressed by the venom gland.

It is found in the secreted. Functionally, ion channel inhibitor. This chain is Omega-theraphotoxin-Hhn1f 3, found in Cyriopagopus hainanus (Chinese bird spider).